The following is a 485-amino-acid chain: MTITPQNLIALLPLLIVGLTVVVVMLSIAWRRNHFLNATLSVIGLNAALVSLWFVGQAGAMDVTPLMRVDGFAMLYTGLVLLASLATCTFAYPWLEGYNDNKDEFYLLVLIAALGGILLANANHLASLFLGIELISLPLFGLVGYAFRQKRSLEASIKYTILSAAASSFLLFGMALVYAQSGDLSFVALGKNLGDGMLNEPLLLAGFGLMIVGLGFKLSLVPFHLWTPDVYQGAPAPVSTFLATASKIAIFGVVMRLFLYAPVGDSEAIRVVLAIIAFASIIFGNLMALSQTNIKRLLGYSSISHLGYLLVALIALQTGEMSMEAVGVYLAGYLFSSLGAFGVVSLMSSPYRGPDADSLFSYRGLFWHRPILAAVMTVMMLSLAGIPMTLGFIGKFYVLAVGVQAHLWWLVGAVVVGSAIGLYYYLRVAVSLYLHAPEQPGRDAPSNWQYSAGGIVVLISALLVLVLGVWPQPLISIVRLAMPLM.

The next 14 helical transmembrane spans lie at 8-28 (LIALLPLLIVGLTVVVVMLSI), 35-55 (FLNATLSVIGLNAALVSLWFV), 71-91 (GFAMLYTGLVLLASLATCTFA), 105-125 (FYLLVLIAALGGILLANANHL), 127-147 (SLFLGIELISLPLFGLVGYAF), 159-179 (YTILSAAASSFLLFGMALVYA), 203-223 (LLAGFGLMIVGLGFKLSLVPF), 235-255 (PAPVSTFLATASKIAIFGVVM), 271-291 (VVLAIIAFASIIFGNLMALSQ), 297-317 (LLGYSSISHLGYLLVALIALQ), 326-346 (VGVYLAGYLFSSLGAFGVVSL), 373-393 (AAVMTVMMLSLAGIPMTLGFI), 408-430 (WWLVGAVVVGSAIGLYYYLRVAV), and 455-475 (IVVLISALLVLVLGVWPQPLI).

Belongs to the complex I subunit 2 family. NDH-1 is composed of 13 different subunits. Subunits NuoA, H, J, K, L, M, N constitute the membrane sector of the complex.

The protein resides in the cell inner membrane. It carries out the reaction a quinone + NADH + 5 H(+)(in) = a quinol + NAD(+) + 4 H(+)(out). In terms of biological role, NDH-1 shuttles electrons from NADH, via FMN and iron-sulfur (Fe-S) centers, to quinones in the respiratory chain. The immediate electron acceptor for the enzyme in this species is believed to be ubiquinone. Couples the redox reaction to proton translocation (for every two electrons transferred, four hydrogen ions are translocated across the cytoplasmic membrane), and thus conserves the redox energy in a proton gradient. The chain is NADH-quinone oxidoreductase subunit N from Escherichia coli O139:H28 (strain E24377A / ETEC).